Here is a 220-residue protein sequence, read N- to C-terminus: MNKSIFIQLQDQIDKEHSIREKLTAEVDLLDEKLRVLQLLLANCEQNLENQEEILEALEIIKSKTRGLAELASNFPYYKYNGVWDRSIQKVVYLYLLASWTGRLDKSLRPTYSLLSLSEVGQILQVPVFPEESTFHLSIEQYLHAVLSLCSELARQSVNSVISGNYHIPFEALNTIQKVHSSFQVLSLKNDSLRRHFDGLKYDLKRSEDVVYDLRIHKLV.

The protein belongs to the translin family. In terms of assembly, forms an octameric ring-shaped structure, which is capable of binding DNA or RNA.

It localises to the cytoplasm. It is found in the nucleus. Its function is as follows. DNA-binding protein that specifically recognizes consensus sequences at the breakpoint junctions in chromosomal translocations. Selectively binds single-stranded d(GT)n and d(GTT)n microsatellite repeats. Has much higher affinities for the homologous RNA sequences (GU)n and (GUU)n. Does not bind double-stranded DNA. Has a role in meiosis. The sequence is that of Translin-1 (tsn1) from Schizosaccharomyces pombe (strain 972 / ATCC 24843) (Fission yeast).